A 667-amino-acid chain; its full sequence is Transketolase (667 aa).

H27 contacts substrate. Thiamine diphosphate-binding positions include H67 and G115–L117. Mg(2+) is bound at residue D156. Thiamine diphosphate is bound by residues G157 and N186. The Mg(2+) site is built by N186 and I188. Substrate contacts are provided by H262, R357, and S384. H262 lines the thiamine diphosphate pocket. The Proton donor role is filled by E411. Thiamine diphosphate is bound at residue F437. Substrate is bound by residues H461, D469, and R520.

It belongs to the transketolase family. Homodimer. Mg(2+) is required as a cofactor. The cofactor is Ca(2+). Mn(2+) serves as cofactor. Requires Co(2+) as cofactor. It depends on thiamine diphosphate as a cofactor.

The catalysed reaction is D-sedoheptulose 7-phosphate + D-glyceraldehyde 3-phosphate = aldehydo-D-ribose 5-phosphate + D-xylulose 5-phosphate. Its function is as follows. Catalyzes the transfer of a two-carbon ketol group from a ketose donor to an aldose acceptor, via a covalent intermediate with the cofactor thiamine pyrophosphate. The protein is Transketolase (tkt) of Bacillus subtilis (strain 168).